Consider the following 158-residue polypeptide: Scytalone dehydratase-like protein CPUR_05428 (158 aa).

Residues Tyr24 and Tyr44 each coordinate substrate. Active-site residues include His79 and His104.

The protein belongs to the scytalone dehydratase family.

It participates in pigment biosynthesis. Its function is as follows. Scytalone dehydratase-like protein; part of the ergochrome gene cluster responsible for the typical purple-black color of the ergot sclerotia. The ergochrome gene cluster produces several ergot pigments including the yellow ergochrome secalonic acid and its derivatives, as well as the red anthraquinones endocrocin and clavorubin. The pathway begins with the synthesis of atrochrysone thioester by the polyketide synthase (PKS) CPUR_05437. The atrochrysone carboxyl ACP thioesterase CPUR_05436 then breaks the thioester bond and releases the atrochrysone carboxylic acid from CPUR_05437. The atrochrysone carboxylic acid is then converted to atrochrysone which is further transformed into emodin anthrone. The next step is performed by the anthrone oxygenase CPUR_05434 that catalyzes the oxidation of emodinanthrone to emodin. Emodin is further modified to yield monodictyphenone via several steps involving CPUR_05427, CPUR_05428, CPUR_05429 and CPUR_05430. The short chain dehydrogenase/reductase CPUR_05418 then catalyzes the C-5 ketoreduction to give the xanthone skeleton of the monomeric units. Ergochromes formation requires further dimerization steps of different xanthone units, probably catalyzed by the cytochrome P450 monooxygenase CPUR_05419. CPUR_05425, CPUR_05426 and CPUR_05431 are unique to Claviceps, thus it is likely that they are involved in further modification of xanthone units or in their dimerization. The yellow ergochromes and the red anthraquinone pigments endocrocin and clavorubin are products from the same PKS derived precursors and the latter are likely shunt products in the pathway of xanthone biosynthesis. It is proposed that atrochrysone carboxylic acid released from the PKS CPUR_05437 can also be converted to endocrocin anthrone which is further oxidized into endocrocin by CPUR_05435. Endocrocin could be then modified to clavorubin, possibly by CPUR_05423 and CPUR_05431. Clavorubin is the principal anthraquinone metabolite produced by the cluster with a much higher yield compared to endocrocin. This chain is Scytalone dehydratase-like protein CPUR_05428, found in Claviceps purpurea (strain 20.1) (Ergot fungus).